Here is a 152-residue protein sequence, read N- to C-terminus: Superoxide dismutase [Cu-Zn] (152 aa).

C7 is lipidated: S-palmitoyl cysteine. Cu cation-binding residues include H47, H49, and H64. A disulfide bond links C58 and C146. 4 residues coordinate Zn(2+): H64, H72, H81, and D84. H120 is a Cu cation binding site.

Belongs to the Cu-Zn superoxide dismutase family. Homodimer. The cofactor is Cu cation. Zn(2+) is required as a cofactor.

Its subcellular location is the cytoplasm. It is found in the nucleus. It catalyses the reaction 2 superoxide + 2 H(+) = H2O2 + O2. Functionally, destroys radicals which are normally produced within the cells and which are toxic to biological systems. The chain is Superoxide dismutase [Cu-Zn] (sod1) from Xiphias gladius (Swordfish).